The chain runs to 521 residues: Probable methylmalonate-semialdehyde/malonate-semialdehyde dehydrogenase [acylating], mitochondrial (521 aa).

NAD(+) is bound by residues alanine 170, phenylalanine 172, lysine 196, glutamate 199, arginine 200, and serine 249. Catalysis depends on cysteine 304, which acts as the Nucleophile. An NAD(+)-binding site is contributed by glutamate 404.

It belongs to the aldehyde dehydrogenase family. As to quaternary structure, homotetramer.

Its subcellular location is the mitochondrion. It catalyses the reaction 2-methyl-3-oxopropanoate + NAD(+) + CoA + H2O = propanoyl-CoA + hydrogencarbonate + NADH + H(+). The enzyme catalyses 3-oxopropanoate + NAD(+) + CoA + H2O = hydrogencarbonate + acetyl-CoA + NADH + H(+). Probable malonate and methylmalonate semialdehyde dehydrogenase involved in the catabolism of valine, thymine, and compounds catabolized by way of beta-alanine, including uracil and cytidine. This Anopheles gambiae (African malaria mosquito) protein is Probable methylmalonate-semialdehyde/malonate-semialdehyde dehydrogenase [acylating], mitochondrial.